A 244-amino-acid polypeptide reads, in one-letter code: NAD(P)H-quinone oxidoreductase subunit K (244 aa).

Residues cysteine 51, cysteine 52, cysteine 116, and cysteine 147 each coordinate [4Fe-4S] cluster.

This sequence belongs to the complex I 20 kDa subunit family. As to quaternary structure, NDH-1 can be composed of about 15 different subunits; different subcomplexes with different compositions have been identified which probably have different functions. The cofactor is [4Fe-4S] cluster.

The protein localises to the cellular thylakoid membrane. The enzyme catalyses a plastoquinone + NADH + (n+1) H(+)(in) = a plastoquinol + NAD(+) + n H(+)(out). It carries out the reaction a plastoquinone + NADPH + (n+1) H(+)(in) = a plastoquinol + NADP(+) + n H(+)(out). Functionally, NDH-1 shuttles electrons from an unknown electron donor, via FMN and iron-sulfur (Fe-S) centers, to quinones in the respiratory and/or the photosynthetic chain. The immediate electron acceptor for the enzyme in this species is believed to be plastoquinone. Couples the redox reaction to proton translocation, and thus conserves the redox energy in a proton gradient. Cyanobacterial NDH-1 also plays a role in inorganic carbon-concentration. This is NAD(P)H-quinone oxidoreductase subunit K from Synechococcus sp. (strain JA-3-3Ab) (Cyanobacteria bacterium Yellowstone A-Prime).